Reading from the N-terminus, the 189-residue chain is Peptidyl-tRNA hydrolase (189 aa).

Tyrosine 15 contributes to the tRNA binding site. The active-site Proton acceptor is histidine 20. Phenylalanine 66, asparagine 68, and asparagine 114 together coordinate tRNA.

This sequence belongs to the PTH family. In terms of assembly, monomer.

It localises to the cytoplasm. The catalysed reaction is an N-acyl-L-alpha-aminoacyl-tRNA + H2O = an N-acyl-L-amino acid + a tRNA + H(+). Its function is as follows. Hydrolyzes ribosome-free peptidyl-tRNAs (with 1 or more amino acids incorporated), which drop off the ribosome during protein synthesis, or as a result of ribosome stalling. Functionally, catalyzes the release of premature peptidyl moieties from peptidyl-tRNA molecules trapped in stalled 50S ribosomal subunits, and thus maintains levels of free tRNAs and 50S ribosomes. This is Peptidyl-tRNA hydrolase from Streptococcus sanguinis (strain SK36).